We begin with the raw amino-acid sequence, 355 residues long: UDP-N-acetylglucosamine--N-acetylmuramyl-(pentapeptide) pyrophosphoryl-undecaprenol N-acetylglucosamine transferase (355 aa).

UDP-N-acetyl-alpha-D-glucosamine contacts are provided by residues threonine 15–glycine 17, asparagine 127, arginine 163, serine 191, isoleucine 244, alanine 263–glutamate 268, and glutamine 288.

This sequence belongs to the glycosyltransferase 28 family. MurG subfamily.

The protein resides in the cell inner membrane. It carries out the reaction di-trans,octa-cis-undecaprenyl diphospho-N-acetyl-alpha-D-muramoyl-L-alanyl-D-glutamyl-meso-2,6-diaminopimeloyl-D-alanyl-D-alanine + UDP-N-acetyl-alpha-D-glucosamine = di-trans,octa-cis-undecaprenyl diphospho-[N-acetyl-alpha-D-glucosaminyl-(1-&gt;4)]-N-acetyl-alpha-D-muramoyl-L-alanyl-D-glutamyl-meso-2,6-diaminopimeloyl-D-alanyl-D-alanine + UDP + H(+). It functions in the pathway cell wall biogenesis; peptidoglycan biosynthesis. Functionally, cell wall formation. Catalyzes the transfer of a GlcNAc subunit on undecaprenyl-pyrophosphoryl-MurNAc-pentapeptide (lipid intermediate I) to form undecaprenyl-pyrophosphoryl-MurNAc-(pentapeptide)GlcNAc (lipid intermediate II). The protein is UDP-N-acetylglucosamine--N-acetylmuramyl-(pentapeptide) pyrophosphoryl-undecaprenol N-acetylglucosamine transferase of Escherichia coli O157:H7.